We begin with the raw amino-acid sequence, 213 residues long: ATP-dependent Clp protease proteolytic subunit (213 aa).

Serine 114 serves as the catalytic Nucleophile. The active site involves histidine 139.

The protein belongs to the peptidase S14 family. In terms of assembly, fourteen ClpP subunits assemble into 2 heptameric rings which stack back to back to give a disk-like structure with a central cavity, resembling the structure of eukaryotic proteasomes.

It is found in the cytoplasm. It carries out the reaction Hydrolysis of proteins to small peptides in the presence of ATP and magnesium. alpha-casein is the usual test substrate. In the absence of ATP, only oligopeptides shorter than five residues are hydrolyzed (such as succinyl-Leu-Tyr-|-NHMec, and Leu-Tyr-Leu-|-Tyr-Trp, in which cleavage of the -Tyr-|-Leu- and -Tyr-|-Trp bonds also occurs).. Its function is as follows. Cleaves peptides in various proteins in a process that requires ATP hydrolysis. Has a chymotrypsin-like activity. Plays a major role in the degradation of misfolded proteins. This chain is ATP-dependent Clp protease proteolytic subunit, found in Pseudomonas syringae pv. syringae (strain B728a).